Consider the following 381-residue polypeptide: Dihydroorotate dehydrogenase (quinone) (381 aa).

FMN is bound by residues 77–81 (AGCDK) and Ala-101. Lys-81 contacts substrate. Residue 126–129 (NRLG) participates in substrate binding. FMN-binding residues include Asn-158 and Asn-191. Asn-191 is a binding site for substrate. Ser-194 (nucleophile) is an active-site residue. A substrate-binding site is contributed by Asn-196. Residues Lys-229 and Thr-257 each contribute to the FMN site. 258–259 (NT) serves as a coordination point for substrate. FMN is bound by residues Gly-287, Gly-316, and 337 to 338 (YT).

Belongs to the dihydroorotate dehydrogenase family. Type 2 subfamily. Monomer. It depends on FMN as a cofactor.

It localises to the cell membrane. It catalyses the reaction (S)-dihydroorotate + a quinone = orotate + a quinol. It functions in the pathway pyrimidine metabolism; UMP biosynthesis via de novo pathway; orotate from (S)-dihydroorotate (quinone route): step 1/1. In terms of biological role, catalyzes the conversion of dihydroorotate to orotate with quinone as electron acceptor. The sequence is that of Dihydroorotate dehydrogenase (quinone) (pyrD) from Synechocystis sp. (strain ATCC 27184 / PCC 6803 / Kazusa).